Reading from the N-terminus, the 343-residue chain is Sorbitol dehydrogenase (343 aa).

A disordered region spans residues 1–26; sequence MKALVKTQHGTGHFAVQEKPEPTPGK. The Zn(2+) site is built by Cys39, His60, and Glu61. Residue Glu146 coordinates substrate. Residues Ile174, Arg200, and 262–264 each bind NAD(+); that span reads VGL.

Belongs to the zinc-containing alcohol dehydrogenase family. Homotetramer. The cofactor is Zn(2+).

The enzyme catalyses keto-D-fructose + NADH + H(+) = D-sorbitol + NAD(+). It carries out the reaction xylitol + NAD(+) = D-xylulose + NADH + H(+). It catalyses the reaction L-iditol + NAD(+) = keto-L-sorbose + NADH + H(+). Its function is as follows. Polyol dehydrogenase that catalyzes the NAD(+)-dependent oxidation of various sugar alcohols. Is active with D-sorbitol (D-glucitol), xylitol and L-iditol as substrates, leading to the C2-oxidized products D-fructose, D-xylulose and L-sorbose, respectively. In Halalkalibacterium halodurans (strain ATCC BAA-125 / DSM 18197 / FERM 7344 / JCM 9153 / C-125) (Bacillus halodurans), this protein is Sorbitol dehydrogenase (gutB).